The primary structure comprises 373 residues: Glutamate 5-kinase (373 aa).

An ATP-binding site is contributed by K15. Substrate contacts are provided by S55, D142, and N154. ATP-binding positions include 174–175 (TD) and 216–222 (TGGMATK). Residues 281 to 359 (AGSIVVDAGA…SEIEGILGFR (79 aa)) form the PUA domain.

Belongs to the glutamate 5-kinase family.

It is found in the cytoplasm. The catalysed reaction is L-glutamate + ATP = L-glutamyl 5-phosphate + ADP. It participates in amino-acid biosynthesis; L-proline biosynthesis; L-glutamate 5-semialdehyde from L-glutamate: step 1/2. Catalyzes the transfer of a phosphate group to glutamate to form L-glutamate 5-phosphate. The sequence is that of Glutamate 5-kinase from Citrifermentans bemidjiense (strain ATCC BAA-1014 / DSM 16622 / JCM 12645 / Bem) (Geobacter bemidjiensis).